Here is a 243-residue protein sequence, read N- to C-terminus: Vesicle-associated membrane protein-associated protein B (243 aa).

Ala-2 is subject to N-acetylalanine. At 2–218 the chain is on the cytoplasmic side; it reads AKVEQVLSLE…AALAATGKEE (217 aa). In terms of domain architecture, MSP spans 7–124; it reads VLSLEPQHEL…MDSKLRCVFE (118 aa). Phosphoserine is present on Ser-146. Residue Lys-147 forms a Glycyl lysine isopeptide (Lys-Gly) (interchain with G-Cter in SUMO1) linkage. Phosphoserine is present on residues Ser-156 and Ser-159. Positions 161–196 form a coiled coil; it reads LDDTEVKKVMEECRRLQGEVQRLREESRQLKEEDGL. Phosphoserine is present on Ser-206. Residues 219-239 traverse the membrane as a helical; Anchor for type IV membrane protein segment; the sequence is GLSARLLALVVLFFIVGVIIG.

This sequence belongs to the VAMP-associated protein (VAP) (TC 9.B.17) family. Homodimer, and heterodimer with VAPA. Interacts with VAMP1 and VAMP2. Interacts (via MSP domain) with ZFYVE27. Interacts with RMDN3. Interacts with KIF5A in a ZFYVE27-dependent manner. Interacts (via MSP domain) with STARD3 (via phospho-FFAT motif). Interacts with STARD3NL (via FFAT motif). Interacts with CERT1. Interacts with PLEKHA3 and SACM1L to form a ternary complex. Interacts with VPS13A (via FFAT motif). Interacts with RB1CC1 (via phosphorylated FFAT motif), MIGA2 (via phosphorylated FFAT motif), RMDN3 (via phosphorylated FFAT motif), OSBPL1A (via FFAT motif), KCNB1 (via phosphorylated FFAT motif) and KCNB2 (via phosphorylated FFAT motif). Interacts (via MSP domain) with WDR44 (via FFAT motif); the interactions connect the endoplasmic reticulum (ER) with the endosomal tubule.

The protein resides in the endoplasmic reticulum membrane. Endoplasmic reticulum (ER)-anchored protein that mediates the formation of contact sites between the ER and endosomes via interaction with FFAT motif-containing proteins such as STARD3 or WDR44. Interacts with STARD3 in a FFAT motif phosphorylation dependent manner. Via interaction with WDR44 participates in neosynthesized protein export. Participates in the endoplasmic reticulum unfolded protein response (UPR) by inducing ERN1/IRE1 activity. Involved in cellular calcium homeostasis regulation. The polypeptide is Vesicle-associated membrane protein-associated protein B (Mus musculus (Mouse)).